A 488-amino-acid polypeptide reads, in one-letter code: PTS system mannitol-specific EIICB component (488 aa).

At 1 to 26 (MRKKLAKVKVHIQSLDSLLSSMTMPI) the chain is on the cytoplasmic side. The PTS EIIC type-2 domain maps to 15-362 (LDSLLSSMTM…LSLTRKKQLK (348 aa)). Residues 27–48 (IGIFIAWGLLASFFIPSGWTPD) traverse the membrane as a helical segment. Residues 49-52 (KNLA) are Extracellular-facing. The helical transmembrane segment at 53 to 73 (LMVGIGIQYVIPTIIXFFGGK) threads the bilayer. At 74–147 (KIYEIRGGVI…SGFEMLVNNF (74 aa)) the chain is on the cytoplasmic side. Residues 148–169 (YLGFLGFALIFPSFYLSIYLIG) traverse the membrane as a helical segment. Over 170–178 (YIQLGLKLL) the chain is Extracellular. Residues 179 to 199 (VEIMQQYKLYPIAAIVIEPAK) form a helical membrane-spanning segment. The Cytoplasmic segment spans residues 200–289 (VLFLNNAINH…VLLKPVLILA (90 aa)). The helical transmembrane segment at 290–309 (TIAVGVVGNGILQIFNAGTI) threads the bilayer. Topologically, residues 310–331 (APVSPGSVIAGFLQINKTPLDV) are extracellular. The chain crosses the membrane as a helical span at residues 332 to 353 (AGYALALVLSAVTSLLISLLLL). Residues 354–488 (SLTRKKQLKT…IIEKIKNEKN (135 aa)) lie on the Cytoplasmic side of the membrane. Residues 397–488 (SQVTFVCDAG…IIEKIKNEKN (92 aa)) enclose the PTS EIIB type-2 domain. The active-site Phosphocysteine intermediate; for EIIB activity is the Cys403. Residue Cys403 is modified to Phosphocysteine; by EIIA.

As to quaternary structure, homodimer.

It localises to the cell membrane. It carries out the reaction D-mannitol(out) + N(pros)-phospho-L-histidyl-[protein] = D-mannitol 1-phosphate(in) + L-histidyl-[protein]. The phosphoenolpyruvate-dependent sugar phosphotransferase system (sugar PTS), a major carbohydrate active transport system, catalyzes the phosphorylation of incoming sugar substrates concomitantly with their translocation across the cell membrane. The enzyme II CmtAB PTS system is involved in D-mannitol transport. This is PTS system mannitol-specific EIICB component (mtlA) from Mycoplasma pneumoniae (strain ATCC 29342 / M129 / Subtype 1) (Mycoplasmoides pneumoniae).